A 492-amino-acid polypeptide reads, in one-letter code: 3-octaprenyl-4-hydroxybenzoate carboxy-lyase (492 aa).

Asn-177 is a binding site for Mn(2+). Prenylated FMN-binding positions include 180–182, 194–196, and 199–200; these read IYR, RWL, and RG. Mn(2+) is bound at residue Glu-243. Catalysis depends on Asp-292, which acts as the Proton donor.

The protein belongs to the UbiD family. As to quaternary structure, homohexamer. The cofactor is prenylated FMN. Requires Mn(2+) as cofactor.

The protein localises to the cell membrane. The enzyme catalyses a 4-hydroxy-3-(all-trans-polyprenyl)benzoate + H(+) = a 2-(all-trans-polyprenyl)phenol + CO2. The protein operates within cofactor biosynthesis; ubiquinone biosynthesis. Its function is as follows. Catalyzes the decarboxylation of 3-octaprenyl-4-hydroxy benzoate to 2-octaprenylphenol, an intermediate step in ubiquinone biosynthesis. The chain is 3-octaprenyl-4-hydroxybenzoate carboxy-lyase from Neisseria meningitidis serogroup C / serotype 2a (strain ATCC 700532 / DSM 15464 / FAM18).